The chain runs to 75 residues: Large ribosomal subunit protein bL31 (75 aa).

Belongs to the bacterial ribosomal protein bL31 family. Type A subfamily. In terms of assembly, part of the 50S ribosomal subunit.

Functionally, binds the 23S rRNA. This Chlorobaculum tepidum (strain ATCC 49652 / DSM 12025 / NBRC 103806 / TLS) (Chlorobium tepidum) protein is Large ribosomal subunit protein bL31.